Consider the following 206-residue polypeptide: Small ribosomal subunit protein uS4 (206 aa).

Basic and acidic residues predominate over residues 25–39 (DKLLDRKPNGPGKER). Positions 25–49 (DKLLDRKPNGPGKERGARKRGKTSV) are disordered. Positions 95 to 157 (QRLDNTIYRM…KGIQNLIRHN (63 aa)) constitute an S4 RNA-binding domain.

The protein belongs to the universal ribosomal protein uS4 family. In terms of assembly, part of the 30S ribosomal subunit. Contacts protein S5. The interaction surface between S4 and S5 is involved in control of translational fidelity.

One of the primary rRNA binding proteins, it binds directly to 16S rRNA where it nucleates assembly of the body of the 30S subunit. In terms of biological role, with S5 and S12 plays an important role in translational accuracy. The polypeptide is Small ribosomal subunit protein uS4 (Treponema denticola (strain ATCC 35405 / DSM 14222 / CIP 103919 / JCM 8153 / KCTC 15104)).